The chain runs to 135 residues: Glutaredoxin-C3 (135 aa).

In terms of domain architecture, Glutaredoxin spans 26 to 134 (VARVERLASE…PLLKEAGALW (109 aa)). An intrachain disulfide couples Cys-46 to Cys-49. The short motif at 132-135 (ALWL) is the Responsive for interaction with TGA factors element.

Belongs to the glutaredoxin family. CC-type subfamily.

It is found in the cytoplasm. Its subcellular location is the nucleus. In terms of biological role, has a glutathione-disulfide oxidoreductase activity in the presence of NADPH and glutathione reductase. Reduces low molecular weight disulfides and proteins. This Oryza sativa subsp. japonica (Rice) protein is Glutaredoxin-C3 (GRXC3).